We begin with the raw amino-acid sequence, 147 residues long: SsrA-binding protein (147 aa).

The protein belongs to the SmpB family.

It is found in the cytoplasm. In terms of biological role, required for rescue of stalled ribosomes mediated by trans-translation. Binds to transfer-messenger RNA (tmRNA), required for stable association of tmRNA with ribosomes. tmRNA and SmpB together mimic tRNA shape, replacing the anticodon stem-loop with SmpB. tmRNA is encoded by the ssrA gene; the 2 termini fold to resemble tRNA(Ala) and it encodes a 'tag peptide', a short internal open reading frame. During trans-translation Ala-aminoacylated tmRNA acts like a tRNA, entering the A-site of stalled ribosomes, displacing the stalled mRNA. The ribosome then switches to translate the ORF on the tmRNA; the nascent peptide is terminated with the 'tag peptide' encoded by the tmRNA and targeted for degradation. The ribosome is freed to recommence translation, which seems to be the essential function of trans-translation. This Mycoplasma pneumoniae (strain ATCC 29342 / M129 / Subtype 1) (Mycoplasmoides pneumoniae) protein is SsrA-binding protein.